The primary structure comprises 1309 residues: Phospholipase A I (1309 aa).

4 LRR repeats span residues 155-178 (LPLL…IGKL), 180-201 (NLKI…LRQC), 203-223 (GLVE…DFRA), and 224-248 (MAGL…PLHQ). 3 ARM repeats span residues 315–356 (DEGN…SLAR), 401–439 (SVSQ…NLAF), and 440–481 (CLEN…ILGE). Residues 502–746 (LTMDGGGMKG…VANNPTIFAI (245 aa)) enclose the PNPLA domain. The GXGXXG signature appears at 506–511 (GGGMKG). The short motif at 538-542 (GTSTG) is the GXSXG element. Residue Ser-540 is the Nucleophile of the active site. Asp-733 acts as the Proton acceptor in catalysis. The DGA/G motif lies at 733 to 735 (DGA). The disordered stretch occupies residues 1183 to 1253 (VIGPSNEPQE…EDSDHEKTNR (71 aa)). Residues 1188-1208 (NEPQETPLITSQGSSEYNIGD) are compositionally biased toward polar residues. Residues 1216–1235 (GEEEDEDEEVNEETEREEME) are compositionally biased toward acidic residues.

It belongs to the patatin family.

The protein resides in the plastid. It localises to the chloroplast. In terms of biological role, possesses non-specific lipolytic acyl hydrolase (LAH) activity. Catalyzes the hydrolysis of the galactolipids monogalactosyldiacylglycerol (MGDG) and digalactosyldiacylglycerol (DGDG), and less efficiently the phoshpolipids phosphatidylcholine (PC), phosphatidylethanolamine (PE), phosphatidylglycerol (PG), phosphatidylserine (PS) and phosphatidylinositol (PI). Hydrolyzes phospholipids at both the sn-1 and sn-2 positions. Involved in basal jasmonic acid production and promotes resistance to the necrotrophic fungal pathogen Botrytis cinerea. The sequence is that of Phospholipase A I (PLA1) from Arabidopsis thaliana (Mouse-ear cress).